The chain runs to 544 residues: Prolyl 4-hydroxylase subunit alpha-3 (544 aa).

Positions 1 to 24 (MGPGARLAALLVLLKLGVGDPAAA) are cleaved as a signal peptide. A TPR repeat occupies 227–260 (EDALDYLAFACYQVGNVSCALSLSREFLVYSPDN). Residue asparagine 242 is glycosylated (N-linked (GlcNAc...) asparagine). Positions 422–529 (YAEYLQVVNY…KWVANKWIHE (108 aa)) constitute a Fe2OG dioxygenase domain. Fe cation contacts are provided by histidine 440 and aspartate 442. An N-linked (GlcNAc...) asparagine glycan is attached at asparagine 482. Histidine 510 serves as a coordination point for Fe cation. Lysine 520 contacts 2-oxoglutarate.

Belongs to the P4HA family. In terms of assembly, heterotetramer of two alpha-3 chains and two beta chains (the beta chain is the multi-functional PDI). It depends on Fe(2+) as a cofactor. L-ascorbate is required as a cofactor. Post-translationally, N-glycosylation plays no role in the catalytic activity.

Its subcellular location is the endoplasmic reticulum lumen. The catalysed reaction is L-prolyl-[collagen] + 2-oxoglutarate + O2 = trans-4-hydroxy-L-prolyl-[collagen] + succinate + CO2. Catalyzes the post-translational formation of 4-hydroxyproline in -Xaa-Pro-Gly- sequences in collagens and other proteins. The chain is Prolyl 4-hydroxylase subunit alpha-3 (P4ha3) from Rattus norvegicus (Rat).